The following is a 366-amino-acid chain: Structure-specific endonuclease subunit SLX1 (366 aa).

The GIY-YIG domain occupies 14–95 (AFYCCYLLRS…QNTHATRHID (82 aa)). 2 disordered regions span residues 31 to 59 (IGST…SMQG) and 102 to 124 (RAEE…KRPP). Over residues 109 to 123 (GKKKATSPGRRRKRP) the composition is skewed to basic residues. An SLX1-type zinc finger spans residues 234–289 (CGVCKNPADMSSSLILVCPIEACQTVSHLSCLSNKFLTEGGELETLVPLEGTCPGC). The interval 317–366 (KPKRKRKSDNPAESDAADGQALEQEDEELDETWMEDMSQDEEPSPVKKSR) is disordered. Acidic residues predominate over residues 339-359 (EQEDEELDETWMEDMSQDEEP).

The protein belongs to the SLX1 family. In terms of assembly, forms a heterodimer with SLX4. Requires a divalent metal cation as cofactor.

The protein resides in the nucleus. Functionally, catalytic subunit of the SLX1-SLX4 structure-specific endonuclease that resolves DNA secondary structures generated during DNA repair and recombination. Has endonuclease activity towards branched DNA substrates, introducing single-strand cuts in duplex DNA close to junctions with ss-DNA. This Phaeosphaeria nodorum (strain SN15 / ATCC MYA-4574 / FGSC 10173) (Glume blotch fungus) protein is Structure-specific endonuclease subunit SLX1.